Reading from the N-terminus, the 324-residue chain is 4-hydroxy-3-methylbut-2-enyl diphosphate reductase (324 aa).

Residue Cys-13 coordinates [4Fe-4S] cluster. Residues His-41 and His-75 each contribute to the (2E)-4-hydroxy-3-methylbut-2-enyl diphosphate site. 2 residues coordinate dimethylallyl diphosphate: His-41 and His-75. Residues His-41 and His-75 each coordinate isopentenyl diphosphate. Cys-97 is a binding site for [4Fe-4S] cluster. His-125 serves as a coordination point for (2E)-4-hydroxy-3-methylbut-2-enyl diphosphate. His-125 contributes to the dimethylallyl diphosphate binding site. His-125 is a binding site for isopentenyl diphosphate. Glu-127 (proton donor) is an active-site residue. Thr-168 provides a ligand contact to (2E)-4-hydroxy-3-methylbut-2-enyl diphosphate. Cys-225 serves as a coordination point for [4Fe-4S] cluster. The (2E)-4-hydroxy-3-methylbut-2-enyl diphosphate site is built by Ser-253, Ser-254, Asn-255, and Ser-302. 4 residues coordinate dimethylallyl diphosphate: Ser-253, Ser-254, Asn-255, and Ser-302. Isopentenyl diphosphate contacts are provided by Ser-253, Ser-254, Asn-255, and Ser-302.

It belongs to the IspH family. It depends on [4Fe-4S] cluster as a cofactor.

It carries out the reaction isopentenyl diphosphate + 2 oxidized [2Fe-2S]-[ferredoxin] + H2O = (2E)-4-hydroxy-3-methylbut-2-enyl diphosphate + 2 reduced [2Fe-2S]-[ferredoxin] + 2 H(+). It catalyses the reaction dimethylallyl diphosphate + 2 oxidized [2Fe-2S]-[ferredoxin] + H2O = (2E)-4-hydroxy-3-methylbut-2-enyl diphosphate + 2 reduced [2Fe-2S]-[ferredoxin] + 2 H(+). Its pathway is isoprenoid biosynthesis; dimethylallyl diphosphate biosynthesis; dimethylallyl diphosphate from (2E)-4-hydroxy-3-methylbutenyl diphosphate: step 1/1. It participates in isoprenoid biosynthesis; isopentenyl diphosphate biosynthesis via DXP pathway; isopentenyl diphosphate from 1-deoxy-D-xylulose 5-phosphate: step 6/6. Its function is as follows. Catalyzes the conversion of 1-hydroxy-2-methyl-2-(E)-butenyl 4-diphosphate (HMBPP) into a mixture of isopentenyl diphosphate (IPP) and dimethylallyl diphosphate (DMAPP). Acts in the terminal step of the DOXP/MEP pathway for isoprenoid precursor biosynthesis. The protein is 4-hydroxy-3-methylbut-2-enyl diphosphate reductase of Chlorobium limicola (strain DSM 245 / NBRC 103803 / 6330).